Here is a 227-residue protein sequence, read N- to C-terminus: Fibrillarin-like rRNA/tRNA 2'-O-methyltransferase (227 aa).

Residues Thr-86–Thr-87, Glu-105–Phe-106, Asp-130–Ala-131, and Asp-150–Gln-153 contribute to the S-adenosyl-L-methionine site.

Belongs to the methyltransferase superfamily. Fibrillarin family. In terms of assembly, interacts with nop5. Component of box C/D small ribonucleoprotein (sRNP) particles that contain rpl7ae, FlpA and nop5, plus a guide RNA.

Functionally, involved in pre-rRNA and tRNA processing. Utilizes the methyl donor S-adenosyl-L-methionine to catalyze the site-specific 2'-hydroxyl methylation of ribose moieties in rRNA and tRNA. Site specificity is provided by a guide RNA that base pairs with the substrate. Methylation occurs at a characteristic distance from the sequence involved in base pairing with the guide RNA. The protein is Fibrillarin-like rRNA/tRNA 2'-O-methyltransferase of Pyrococcus horikoshii (strain ATCC 700860 / DSM 12428 / JCM 9974 / NBRC 100139 / OT-3).